The primary structure comprises 201 residues: Small ribosomal subunit protein uS4 (201 aa).

Residues 26 to 46 (LARRAYAPGDHGRDRRGKLSE) form a disordered region. Basic and acidic residues predominate over residues 35-44 (DHGRDRRGKL). An S4 RNA-binding domain is found at 93 to 156 (RRLDNMVYRL…KNLDIIKNAV (64 aa)).

The protein belongs to the universal ribosomal protein uS4 family. Part of the 30S ribosomal subunit. Contacts protein S5. The interaction surface between S4 and S5 is involved in control of translational fidelity.

One of the primary rRNA binding proteins, it binds directly to 16S rRNA where it nucleates assembly of the body of the 30S subunit. Its function is as follows. With S5 and S12 plays an important role in translational accuracy. The sequence is that of Small ribosomal subunit protein uS4 from Limosilactobacillus reuteri (strain DSM 20016) (Lactobacillus reuteri).